The sequence spans 71 residues: Large ribosomal subunit protein bL31 (71 aa).

Residues cysteine 16, cysteine 18, cysteine 37, and cysteine 40 each coordinate Zn(2+).

This sequence belongs to the bacterial ribosomal protein bL31 family. Type A subfamily. In terms of assembly, part of the 50S ribosomal subunit. Requires Zn(2+) as cofactor.

Its function is as follows. Binds the 23S rRNA. The chain is Large ribosomal subunit protein bL31 from Sodalis glossinidius (strain morsitans).